Reading from the N-terminus, the 418-residue chain is Glucose-1-phosphate adenylyltransferase (418 aa).

Alpha-D-glucose 1-phosphate contacts are provided by residues tyrosine 107, glycine 172, 187–188, and serine 205; that span reads EK.

The protein belongs to the bacterial/plant glucose-1-phosphate adenylyltransferase family. In terms of assembly, homotetramer.

The catalysed reaction is alpha-D-glucose 1-phosphate + ATP + H(+) = ADP-alpha-D-glucose + diphosphate. It participates in glycan biosynthesis; glycogen biosynthesis. Its function is as follows. Involved in the biosynthesis of ADP-glucose, a building block required for the elongation reactions to produce glycogen. Catalyzes the reaction between ATP and alpha-D-glucose 1-phosphate (G1P) to produce pyrophosphate and ADP-Glc. In Gemmatimonas aurantiaca (strain DSM 14586 / JCM 11422 / NBRC 100505 / T-27), this protein is Glucose-1-phosphate adenylyltransferase.